Consider the following 136-residue polypeptide: ATP synthase epsilon chain (136 aa).

It belongs to the ATPase epsilon chain family. In terms of assembly, F-type ATPases have 2 components, CF(1) - the catalytic core - and CF(0) - the membrane proton channel. CF(1) has five subunits: alpha(3), beta(3), gamma(1), delta(1), epsilon(1). CF(0) has three main subunits: a, b and c.

The protein localises to the cellular thylakoid membrane. In terms of biological role, produces ATP from ADP in the presence of a proton gradient across the membrane. The polypeptide is ATP synthase epsilon chain (atpC) (Prochloron didemni).